The following is a 961-amino-acid chain: Phosphofurin acidic cluster sorting protein 1 (961 aa).

Over residues Met1–Ser19 the composition is skewed to gly residues. 2 disordered regions span residues Met1–Thr70 and Val76–Ala95. An N-acetylalanine modification is found at Ala2. The segment covering Gln20–Gln34 has biased composition (low complexity). Residue Ser28 is modified to Phosphoserine. The span at Gln35–Pro46 shows a compositional bias: pro residues. Thr44 bears the Phosphothreonine mark. Low complexity predominate over residues Ala51–Thr70. Residue Tyr249 is modified to Phosphotyrosine. Residues Gly260–Asp271 show a composition bias toward basic and acidic residues. Disordered stretches follow at residues Gly260 to Gln297 and Asn375 to Thr426. The segment covering Asn274 to Asp291 has biased composition (acidic residues). Positions His351–Asn375 form a coiled coil. Residues Ser377 and Ser379 each carry the phosphoserine modification. Positions Met404–Thr426 are enriched in polar residues. Ser428 and Ser493 each carry phosphoserine. 2 disordered regions span residues Glu475 to Gln540 and Ser758 to Ser802. Position 502 is a phosphothreonine (Thr502). Phosphoserine is present on residues Ser517, Ser526, Ser527, Ser529, and Ser532. Over residues Ser768–Ser802 the composition is skewed to low complexity.

This sequence belongs to the PACS family. Associates with AP-1 and AP-3 but not with AP-2 complexes. Interacts with FURIN. Forms a ternary complex with FURIN and AP-1. Interacts with PKD2 (via acidic region). Interacts with SORL1. Interacts with WDR37.

The protein resides in the golgi apparatus. The protein localises to the trans-Golgi network. Its function is as follows. Coat protein that is involved in the localization of trans-Golgi network (TGN) membrane proteins that contain acidic cluster sorting motifs. Controls the endosome-to-Golgi trafficking of furin and mannose-6-phosphate receptor by connecting the acidic-cluster-containing cytoplasmic domain of these molecules with the adapter-protein complex-1 (AP-1) of endosomal clathrin-coated membrane pits. Required for normal ER Ca2+ handling in lymphocytes. Together with WDR37, it plays an essential role in lymphocyte development, quiescence and survival. Required for stabilizing peripheral lymphocyte populations. The chain is Phosphofurin acidic cluster sorting protein 1 (Pacs1) from Mus musculus (Mouse).